The sequence spans 203 residues: Monothiol glutaredoxin-7 (203 aa).

The first 32 residues, 1 to 32 (MAIVINKRNVRVLVITNLLLIVVFFVLRNSNA), serve as a signal peptide directing secretion. In terms of domain architecture, Glutaredoxin spans 88–191 (AAEYNKIMEQ…DSFKKWSDGA (104 aa)). A [2Fe-2S] cluster-binding site is contributed by Cys108.

Belongs to the glutaredoxin family. Monothiol subfamily.

This chain is Monothiol glutaredoxin-7 (GRX7), found in Saccharomyces cerevisiae (strain ATCC 204508 / S288c) (Baker's yeast).